Reading from the N-terminus, the 2628-residue chain is Protein FMP27, mitochondrial (2628 aa).

An N-terminal signal peptide occupies residues 1 to 28; it reads MMFPINVLLYKWLIFAVTFLWSCKILLR. The transmembrane domain stretch occupies residues 29 to 192; that stretch reads KLLGINITWI…NTNLLIGEIM (164 aa). LRR repeat units lie at residues 160–182, 213–236, 271–296, 306–333, 571–596, 835–857, 1944–1967, 2101–2125, and 2303–2327; these read FDSF…IFIV, PMNL…KLLQ, IKPL…NHPE, YNVL…IFEE, NADI…LVHN, VVSL…IFGH, FDSL…FFIF, FFML…IFLK, and IGKL…ILRK.

The protein localises to the cell membrane. The protein resides in the endoplasmic reticulum membrane. It localises to the mitochondrion membrane. Tube-forming lipid transport protein which binds to phosphatidylinositols and affects phosphatidylinositol-4,5-bisphosphate (PtdIns-4,5-P2) distribution. The protein is Protein FMP27, mitochondrial of Saccharomyces cerevisiae (strain ATCC 204508 / S288c) (Baker's yeast).